The chain runs to 210 residues: Ribosomal RNA large subunit methyltransferase E (210 aa).

5 residues coordinate S-adenosyl-L-methionine: glycine 67, tryptophan 69, aspartate 87, aspartate 103, and aspartate 128. The active-site Proton acceptor is the lysine 168.

Belongs to the class I-like SAM-binding methyltransferase superfamily. RNA methyltransferase RlmE family.

Its subcellular location is the cytoplasm. The catalysed reaction is uridine(2552) in 23S rRNA + S-adenosyl-L-methionine = 2'-O-methyluridine(2552) in 23S rRNA + S-adenosyl-L-homocysteine + H(+). Specifically methylates the uridine in position 2552 of 23S rRNA at the 2'-O position of the ribose in the fully assembled 50S ribosomal subunit. This is Ribosomal RNA large subunit methyltransferase E from Psychrobacter cryohalolentis (strain ATCC BAA-1226 / DSM 17306 / VKM B-2378 / K5).